We begin with the raw amino-acid sequence, 122 residues long: Large ribosomal subunit protein uL14 (122 aa).

Belongs to the universal ribosomal protein uL14 family. In terms of assembly, part of the 50S ribosomal subunit. Forms a cluster with proteins L3 and L19. In the 70S ribosome, L14 and L19 interact and together make contacts with the 16S rRNA in bridges B5 and B8.

In terms of biological role, binds to 23S rRNA. Forms part of two intersubunit bridges in the 70S ribosome. The chain is Large ribosomal subunit protein uL14 from Desulfosudis oleivorans (strain DSM 6200 / JCM 39069 / Hxd3) (Desulfococcus oleovorans).